Consider the following 322-residue polypeptide: Acetyl-coenzyme A carboxylase carboxyl transferase subunit alpha (322 aa).

In terms of domain architecture, CoA carboxyltransferase C-terminal spans Arg-39 to Gln-293.

Belongs to the AccA family. Acetyl-CoA carboxylase is a heterohexamer composed of biotin carboxyl carrier protein (AccB), biotin carboxylase (AccC) and two subunits each of ACCase subunit alpha (AccA) and ACCase subunit beta (AccD).

It localises to the cytoplasm. It carries out the reaction N(6)-carboxybiotinyl-L-lysyl-[protein] + acetyl-CoA = N(6)-biotinyl-L-lysyl-[protein] + malonyl-CoA. Its pathway is lipid metabolism; malonyl-CoA biosynthesis; malonyl-CoA from acetyl-CoA: step 1/1. Functionally, component of the acetyl coenzyme A carboxylase (ACC) complex. First, biotin carboxylase catalyzes the carboxylation of biotin on its carrier protein (BCCP) and then the CO(2) group is transferred by the carboxyltransferase to acetyl-CoA to form malonyl-CoA. This Ralstonia nicotianae (strain ATCC BAA-1114 / GMI1000) (Ralstonia solanacearum) protein is Acetyl-coenzyme A carboxylase carboxyl transferase subunit alpha.